Here is a 303-residue protein sequence, read N- to C-terminus: Oxygen-dependent coproporphyrinogen-III oxidase (303 aa).

Substrate is bound at residue S93. Residues H97 and H107 each coordinate a divalent metal cation. H107 functions as the Proton donor in the catalytic mechanism. Substrate is bound at residue N109–R111. 2 residues coordinate a divalent metal cation: H146 and H176. Residues Y241–G276 are important for dimerization. G259–R261 contributes to the substrate binding site.

Belongs to the aerobic coproporphyrinogen-III oxidase family. In terms of assembly, homodimer. A divalent metal cation is required as a cofactor.

The protein resides in the cytoplasm. It carries out the reaction coproporphyrinogen III + O2 + 2 H(+) = protoporphyrinogen IX + 2 CO2 + 2 H2O. The protein operates within porphyrin-containing compound metabolism; protoporphyrin-IX biosynthesis; protoporphyrinogen-IX from coproporphyrinogen-III (O2 route): step 1/1. Its function is as follows. Involved in the heme biosynthesis. Catalyzes the aerobic oxidative decarboxylation of propionate groups of rings A and B of coproporphyrinogen-III to yield the vinyl groups in protoporphyrinogen-IX. The polypeptide is Oxygen-dependent coproporphyrinogen-III oxidase (Pseudomonas entomophila (strain L48)).